Here is a 187-residue protein sequence, read N- to C-terminus: MLVLVIGDFHIPDRAPKLSEKFRQLLIPGKISQIICLGNLTSTSVYEYLKHVCSDLKLVKGAFDISSKAPIAGKITLGSFKIGYTNGHLVVPQDSPEALSILAREMDADILLFGGTHKFAAYELDGCFFVNPGSATGAPNVSAVEDDEKIVPSFVLMDVQGAVLILYVYRIFDGEVRVEKMQYRKPE.

This sequence belongs to the VPS29 family. Component of the retromer complex which consists of vps29, vps6, vps35, vps5 and vps17. Component of a retromer subcomplex consisting of vps29, vps26 and vps35.

The protein resides in the cytoplasm. The protein localises to the nucleus. Plays a role in vesicular protein sorting. Required for the endosome-to-Golgi retrieval of the vacuolar protein sorting receptor pep1/vps10. Component of the membrane-associated retromer complex which is essential in endosome-to-Golgi retrograde transport. The vps29-vps26-vps35 subcomplex may be involved in cargo selection. In Schizosaccharomyces pombe (strain 972 / ATCC 24843) (Fission yeast), this protein is Vacuolar protein sorting-associated protein 29 (vps29).